Consider the following 93-residue polypeptide: Cobalt transport protein CbiN (93 aa).

A run of 2 helical transmembrane segments spans residues 5 to 25 (LILLAMVVALMILPFFINHGG) and 63 to 83 (LLFTLQGSLGAAVIFYILGYA).

Belongs to the CbiN family. Forms an energy-coupling factor (ECF) transporter complex composed of an ATP-binding protein (A component, CbiO), a transmembrane protein (T component, CbiQ) and 2 possible substrate-capture proteins (S components, CbiM and CbiN) of unknown stoichimetry.

The protein resides in the cell inner membrane. It functions in the pathway cofactor biosynthesis; adenosylcobalamin biosynthesis. Its function is as follows. Part of the energy-coupling factor (ECF) transporter complex CbiMNOQ involved in cobalt import. The polypeptide is Cobalt transport protein CbiN (Klebsiella pneumoniae (strain 342)).